A 176-amino-acid polypeptide reads, in one-letter code: ATP-dependent protease subunit HslV (176 aa).

Thr2 is an active-site residue. Na(+)-binding residues include Gly157, Cys160, and Thr163.

Belongs to the peptidase T1B family. HslV subfamily. In terms of assembly, a double ring-shaped homohexamer of HslV is capped on each side by a ring-shaped HslU homohexamer. The assembly of the HslU/HslV complex is dependent on binding of ATP.

The protein localises to the cytoplasm. The enzyme catalyses ATP-dependent cleavage of peptide bonds with broad specificity.. Its activity is regulated as follows. Allosterically activated by HslU binding. Functionally, protease subunit of a proteasome-like degradation complex believed to be a general protein degrading machinery. The chain is ATP-dependent protease subunit HslV from Enterobacter sp. (strain 638).